The primary structure comprises 299 residues: Ankyrin repeat domain-containing protein 54 (299 aa).

Positions 1-27 (MAATGGGADDESRSGRSSSDGECAVAP) are disordered. At Ala2 the chain carries N-acetylalanine. Position 62 is a phosphoserine (Ser62). Positions 98-116 (RRLGPTGKEVHALKRLRDS) match the Nuclear localization signal (NLS) motif. ANK repeat units follow at residues 108-137 (HALK…DPCA), 141-170 (KGRT…DPNQ), 174-203 (LGNT…RVDA), and 207-239 (AGRT…EVKQ). Residues 140–240 (DKGRTALHFA…EAVRLEVKQI (101 aa)) are LYN-binding. The Nuclear export signal (NES) motif lies at 282–292 (LLASFTSLSLQ).

As to quaternary structure, interacts (via ankyrin repeat region) with LYN (via SH3-domain) in an activation-independent status of LYN. Forms a multiprotein complex with LYN and HCLS1. Interacts with TSN2, VAV1, DBNL and LASP1. Expressed in a variety of hemopoietic cell lines and tissue with high levels in testis. Highly expressed in ciliated cells.

The protein resides in the nucleus. It localises to the cytoplasm. It is found in the midbody. In terms of biological role, plays an important role in regulating intracellular signaling events associated with erythroid terminal differentiation. The protein is Ankyrin repeat domain-containing protein 54 (Ankrd54) of Mus musculus (Mouse).